A 192-amino-acid chain; its full sequence is Phosphoheptose isomerase (192 aa).

Positions 35–192 (LIETLENQGK…CIERHFAHKN (158 aa)) constitute an SIS domain. Residue 50–52 (NGG) participates in substrate binding. Residues histidine 59 and glutamate 63 each coordinate Zn(2+). Substrate contacts are provided by residues glutamate 63, 92–93 (ND), 118–120 (STS), serine 123, and glutamine 170. The Zn(2+) site is built by glutamine 170 and histidine 178.

This sequence belongs to the SIS family. GmhA subfamily. In terms of assembly, homotetramer. Requires Zn(2+) as cofactor.

It localises to the cytoplasm. The catalysed reaction is 2 D-sedoheptulose 7-phosphate = D-glycero-alpha-D-manno-heptose 7-phosphate + D-glycero-beta-D-manno-heptose 7-phosphate. Its pathway is carbohydrate biosynthesis; D-glycero-D-manno-heptose 7-phosphate biosynthesis; D-glycero-alpha-D-manno-heptose 7-phosphate and D-glycero-beta-D-manno-heptose 7-phosphate from sedoheptulose 7-phosphate: step 1/1. It participates in bacterial outer membrane biogenesis; LPS core biosynthesis. Functionally, catalyzes the isomerization of sedoheptulose 7-phosphate in D-glycero-D-manno-heptose 7-phosphate. The protein is Phosphoheptose isomerase of Helicobacter pylori (strain ATCC 700392 / 26695) (Campylobacter pylori).